We begin with the raw amino-acid sequence, 174 residues long: Gamma-crystallin C (174 aa).

2 Beta/gamma crystallin 'Greek key' domains span residues 2-40 (GKIT…RVDS) and 41-83 (GCWM…RLIP). The residue at position 23 (cysteine 23) is an S-methylcysteine. Residues 84-87 (HTGS) are connecting peptide. Beta/gamma crystallin 'Greek key' domains are found at residues 88–128 (HRMR…HVLE) and 129–171 (GCWV…RRVV).

This sequence belongs to the beta/gamma-crystallin family.

In terms of biological role, crystallins are the dominant structural components of the vertebrate eye lens. The protein is Gamma-crystallin C (Crygc) of Rattus norvegicus (Rat).